Consider the following 158-residue polypeptide: Cytosine deaminase (158 aa).

Residues 9 to 129 enclose the CMP/dCMP-type deaminase domain; it reads KWDQKGMDIA…KYLQTRGHEV (121 aa). A substrate-binding site is contributed by N51. Residue H62 participates in Zn(2+) binding. The active-site Proton donor is E64. Residues C91 and C94 each coordinate Zn(2+). A substrate-binding site is contributed by D155.

The protein belongs to the cytidine and deoxycytidylate deaminase family. Homodimer. Zn(2+) serves as cofactor.

It is found in the cytoplasm. The protein localises to the nucleus. The catalysed reaction is cytosine + H2O + H(+) = uracil + NH4(+). The protein operates within pyrimidine metabolism; UMP biosynthesis via salvage pathway; uracil from cytosine: step 1/1. In terms of biological role, catalyzes the hydrolytic deamination of cytosine to uracil or 5-methylcytosine to thymine. Is involved in the pyrimidine salvage pathway, which allows the cell to utilize cytosine for pyrimidine nucleotide synthesis. This chain is Cytosine deaminase, found in Saccharomyces cerevisiae (strain ATCC 204508 / S288c) (Baker's yeast).